Here is a 210-residue protein sequence, read N- to C-terminus: MHYIQQPQTIEANSFTIISDIIRETRPDYRFASPLHEAIIKRVIHTTADFDWLDILWFSADALEQLCDALRHPCIIYTDTTMALSGINKRLLATFGGECRCYISDPRVVRAAQTQGITRSMAAVDIAIAEEEKNKLFVFGNAPTALFRLLEHNVTVSGVVGVPVGFVGAAESKEALTHSHFPAVAALGRKGGSNVAAAIVNALLYHLREA.

Positions 14 and 42 each coordinate substrate. Residue His45 is the Proton donor/acceptor of the active site.

It belongs to the CobH/CbiC family. In terms of assembly, homodimer.

The catalysed reaction is Co-precorrin-8X = cob(II)yrinate. It participates in cofactor biosynthesis; adenosylcobalamin biosynthesis; cob(II)yrinate a,c-diamide from sirohydrochlorin (anaerobic route): step 9/10. Functionally, catalyzes the conversion of cobalt-precorrin-8 to cobyrinate. This Salmonella typhimurium (strain LT2 / SGSC1412 / ATCC 700720) protein is Cobalt-precorrin-8 methylmutase (cbiC).